Here is a 753-residue protein sequence, read N- to C-terminus: Taperin (753 aa).

The interval 141–348 (FDSPAAPRRR…IRPSSKPDME (208 aa)) is disordered. Residues 182 to 197 (PAPPVLPSQPAPPISP) show a composition bias toward pro residues. 2 stretches are compositionally biased toward polar residues: residues 230–239 (LQKTGSNSFT) and 250–263 (VNRSLSNGPMTQES). Ser274 carries the phosphoserine modification. The span at 300–322 (TPSATPVGPPAFLAPSPASATPS) shows a compositional bias: low complexity. Residues 323-335 (QRQWVSSATSAND) show a composition bias toward polar residues. The segment covering 337 to 347 (FEIRPSSKPDM) has biased composition (basic and acidic residues). 3 positions are modified to phosphoserine: Ser402, Ser458, and Ser502. A disordered region spans residues 438–488 (GCPRPAISDTDKSVRRQRPASPPPFLPATTEAEPAEGLGVPGLTKNGQEPV). Disordered stretches follow at residues 544 to 583 (FTVVPKRKPGTLQEPHLSQTNGQFQQGAEEQDADSLSGPH) and 637 to 676 (FEYPSESSLAQEEAEEEEEEEEEEEGEDGEEEEVGPDSEK). The segment covering 559 to 571 (HLSQTNGQFQQGA) has biased composition (polar residues). The span at 648–672 (EEAEEEEEEEEEEEGEDGEEEEVGP) shows a compositional bias: acidic residues.

Belongs to the taperin family. As to quaternary structure, interacts with GRXCR2; the interaction restricts TPRN to the stereocilum basal region. Interacts with actin ACTB; the interaction may stabilize stereocilia. Interacts with CLIC5. Interacts with PTPRQ. TPRN, CLIC5 and PTPQR form concentric rings at the base of stereocilia and may form a complex. Interacts with phosphatase PPP1CA; the interaction results in inhibition of PPC1A phosphatase activity. Interacts with DNA damage response proteins XRCC6/KU70, XRCC5/KU80, PARP1, TOP1 and TOP2A; these interactions recruit TPRN to sites of DNA damage where it may play a role in DNA repair.

Its subcellular location is the cell projection. It localises to the stereocilium. The protein localises to the microvillus. It is found in the nucleus. The protein resides in the nucleoplasm. Its subcellular location is the cytoplasm. Functionally, essential for hearing. Required for maintenance of stereocilia on both inner and outer hair cells. Necessary for the integrity of the stereociliary rootlet. May act as an actin cytoskeleton regulator involved in the regulation of actin dynamics at the pointed end in hair cells. Forms rings at the base of stereocilia and binds actin filaments in the stereocilia which may stabilize the stereocilia. Acts as a strong inhibitor of PPP1CA phosphatase activity. Recruited to sites of DNA damage and may play a role in DNA damage repair. This chain is Taperin (Tprn), found in Rattus norvegicus (Rat).